The sequence spans 361 residues: Large ribosomal subunit protein mL45 (361 aa).

The protein belongs to the mitochondrion-specific ribosomal protein mL45 family.

The protein localises to the mitochondrion. This Caenorhabditis briggsae protein is Large ribosomal subunit protein mL45 (mrpl-45).